A 100-amino-acid polypeptide reads, in one-letter code: Putative septation protein SpoVG (100 aa).

This sequence belongs to the SpoVG family.

Could be involved in septation. This chain is Putative septation protein SpoVG, found in Staphylococcus aureus (strain MRSA252).